Reading from the N-terminus, the 285-residue chain is Small ribosomal subunit biogenesis GTPase RsgA (285 aa).

Positions Lys-61–Phe-215 constitute a CP-type G domain. GTP-binding positions include Thr-110–Asp-113 and Gly-159–Ser-167. The Zn(2+) site is built by Cys-239, Cys-244, His-246, and Cys-254.

This sequence belongs to the TRAFAC class YlqF/YawG GTPase family. RsgA subfamily. Monomer. Associates with 30S ribosomal subunit, binds 16S rRNA. Zn(2+) is required as a cofactor.

Its subcellular location is the cytoplasm. Functionally, one of several proteins that assist in the late maturation steps of the functional core of the 30S ribosomal subunit. Helps release RbfA from mature subunits. May play a role in the assembly of ribosomal proteins into the subunit. Circularly permuted GTPase that catalyzes slow GTP hydrolysis, GTPase activity is stimulated by the 30S ribosomal subunit. This is Small ribosomal subunit biogenesis GTPase RsgA from Mesomycoplasma hyopneumoniae (strain 7448) (Mycoplasma hyopneumoniae).